The following is a 486-amino-acid chain: Membrane-bound lytic murein transglycosylase F (486 aa).

Residues 1 to 21 (MTRIKLSYFTIGLVALLLALA) form the signal peptide. The segment at 22 to 268 (LWPNIPWRNG…RLEEKYLGHV (247 aa)) is non-LT domain. The segment at 269–486 (GSFDYVDTKT…VVGPGWSIGD (218 aa)) is LT domain. Residue E313 is part of the active site.

The protein in the N-terminal section; belongs to the bacterial solute-binding protein 3 family. This sequence in the C-terminal section; belongs to the transglycosylase Slt family.

Its subcellular location is the cell outer membrane. It carries out the reaction Exolytic cleavage of the (1-&gt;4)-beta-glycosidic linkage between N-acetylmuramic acid (MurNAc) and N-acetylglucosamine (GlcNAc) residues in peptidoglycan, from either the reducing or the non-reducing ends of the peptidoglycan chains, with concomitant formation of a 1,6-anhydrobond in the MurNAc residue.. Its function is as follows. Murein-degrading enzyme that degrades murein glycan strands and insoluble, high-molecular weight murein sacculi, with the concomitant formation of a 1,6-anhydromuramoyl product. Lytic transglycosylases (LTs) play an integral role in the metabolism of the peptidoglycan (PG) sacculus. Their lytic action creates space within the PG sacculus to allow for its expansion as well as for the insertion of various structures such as secretion systems and flagella. In Yersinia pestis bv. Antiqua (strain Antiqua), this protein is Membrane-bound lytic murein transglycosylase F.